A 264-amino-acid polypeptide reads, in one-letter code: Orotidine 5'-phosphate decarboxylase (264 aa).

Substrate is bound by residues Asp-37, 59–61 (KTH), 91–100 (DRKFADIGNT), Tyr-217, and Arg-235. The active-site Proton donor is Lys-93.

Belongs to the OMP decarboxylase family.

It carries out the reaction orotidine 5'-phosphate + H(+) = UMP + CO2. It functions in the pathway pyrimidine metabolism; UMP biosynthesis via de novo pathway; UMP from orotate: step 2/2. The chain is Orotidine 5'-phosphate decarboxylase (URA3) from Torulaspora delbrueckii (Yeast).